The following is a 452-amino-acid chain: Pup--protein ligase (452 aa).

Mg(2+) is bound at residue Glu9. Arg53 is a binding site for ATP. Position 55 (Tyr55) interacts with Mg(2+). Asp57 functions as the Proton acceptor in the catalytic mechanism. Glu63 contacts Mg(2+). ATP contacts are provided by Thr66 and Trp419.

The protein belongs to the Pup ligase/Pup deamidase family. Pup-conjugating enzyme subfamily.

The catalysed reaction is ATP + [prokaryotic ubiquitin-like protein]-L-glutamate + [protein]-L-lysine = ADP + phosphate + N(6)-([prokaryotic ubiquitin-like protein]-gamma-L-glutamyl)-[protein]-L-lysine.. The protein operates within protein degradation; proteasomal Pup-dependent pathway. It functions in the pathway protein modification; protein pupylation. Catalyzes the covalent attachment of the prokaryotic ubiquitin-like protein modifier Pup to the proteasomal substrate proteins, thereby targeting them for proteasomal degradation. This tagging system is termed pupylation. The ligation reaction involves the side-chain carboxylate of the C-terminal glutamate of Pup and the side-chain amino group of a substrate lysine. The chain is Pup--protein ligase from Mycobacterium ulcerans (strain Agy99).